The sequence spans 540 residues: Signal peptide peptidase-like 2 (540 aa).

A signal peptide spans 1–27; the sequence is MDSLRFLRILLLSSSILLLSLRSTVTA. At 28–196 the chain is on the lumenal side; it reads GDIVHQDNLA…PRRPAVDVAE (169 aa). N-linked (GlcNAc...) asparagine glycosylation occurs at Asn-83. One can recognise a PA domain in the interval 95–173; that stretch reads SCTPLKNKLS…QDAGASLQKM (79 aa). Residue Asn-176 is glycosylated (N-linked (GlcNAc...) asparagine). The helical transmembrane segment at 197–217 threads the bilayer; the sequence is VFLWLMAIGTILCASYWSAWS. The Cytoplasmic segment spans residues 218–248; it reads AREAAIEHDKLLKDAIDEIPNTNDGGSGVVE. The chain crosses the membrane as a helical span at residues 249-269; that stretch reads INSISAIFFVVLASGFLVILY. The Lumenal segment spans residues 270–278; sequence KLMSYWFVE. The chain crosses the membrane as a helical span at residues 279-299; the sequence is LLVVVFCIGGVEGLQTCLVAL. Residues 300 to 319 lie on the Cytoplasmic side of the membrane; it reads LSRWFQRAADTYVKVPFLGP. Residues 320–340 traverse the membrane as a helical segment; the sequence is ISYLTLAVSPFCIVFAVLWAV. Residues 341-345 are Lumenal-facing; that stretch reads YRVHS. Residues 346 to 366 form a helical membrane-spanning segment; sequence FAWIGQDVLGIALIITVLQIV. At 367–370 the chain is on the cytoplasmic side; that stretch reads HVPN. The helical transmembrane segment at 371–391 threads the bilayer; the sequence is LKVGTVLLSCAFLYDIFWVFV. Asp-385 is an active-site residue. Residues 392–429 are Lumenal-facing; that stretch reads SKKLFHESVMIVVARGDKSGEDGIPMLLKIPRMFDPWG. A helical membrane pass occupies residues 430-450; it reads GYSIIGFGDILLPGLLIAFAL. Residue Asp-438 is part of the active site. The Cytoplasmic segment spans residues 451-462; the sequence is RYDWLANKTLRT. The chain crosses the membrane as a helical span at residues 463-483; it reads GYFIWAMVAYGLGLLITYVAL. Topologically, residues 484–488 are lumenal; sequence NLMDG. A helical membrane pass occupies residues 489-509; the sequence is HGQPALLYIVPFTLGTMLTLA. The PAL signature appears at 492–494; sequence PAL. Over 510–540 the chain is Cytoplasmic; sequence RKRDDLWILWTKGEPERACPHHVRLEQCSEK.

This sequence belongs to the peptidase A22B family. Post-translationally, glycosylated. In terms of tissue distribution, ubiquitous.

Its subcellular location is the endosome membrane. Intramembrane-cleaving aspartic protease (I-CLiP) that cleaves type II membrane signal peptides in the hydrophobic plane of the membrane. This Arabidopsis thaliana (Mouse-ear cress) protein is Signal peptide peptidase-like 2 (SPPL2).